The following is a 473-amino-acid chain: Aspartyl/glutamyl-tRNA(Asn/Gln) amidotransferase subunit B (473 aa).

It belongs to the GatB/GatE family. GatB subfamily. Heterotrimer of A, B and C subunits.

It carries out the reaction L-glutamyl-tRNA(Gln) + L-glutamine + ATP + H2O = L-glutaminyl-tRNA(Gln) + L-glutamate + ADP + phosphate + H(+). The catalysed reaction is L-aspartyl-tRNA(Asn) + L-glutamine + ATP + H2O = L-asparaginyl-tRNA(Asn) + L-glutamate + ADP + phosphate + 2 H(+). Allows the formation of correctly charged Asn-tRNA(Asn) or Gln-tRNA(Gln) through the transamidation of misacylated Asp-tRNA(Asn) or Glu-tRNA(Gln) in organisms which lack either or both of asparaginyl-tRNA or glutaminyl-tRNA synthetases. The reaction takes place in the presence of glutamine and ATP through an activated phospho-Asp-tRNA(Asn) or phospho-Glu-tRNA(Gln). This chain is Aspartyl/glutamyl-tRNA(Asn/Gln) amidotransferase subunit B, found in Campylobacter hominis (strain ATCC BAA-381 / DSM 21671 / CCUG 45161 / LMG 19568 / NCTC 13146 / CH001A).